A 762-amino-acid chain; its full sequence is Catalase-peroxidase (762 aa).

A disordered region spans residues 1–22 (MAEAKCPFSQSRSNANVAGGGT). A cross-link (tryptophyl-tyrosyl-methioninium (Trp-Tyr) (with M-268)) is located at residues 96–242 (WHSAGTYRVF…LAASHMGLIY (147 aa)). His-97 acts as the Proton acceptor in catalysis. Residues 242–268 (YVNPEGPDGNPDPVAAARDIRTTFGRM) constitute a cross-link (tryptophyl-tyrosyl-methioninium (Tyr-Met) (with W-96)). His-283 is a binding site for heme b.

It belongs to the peroxidase family. Peroxidase/catalase subfamily. Homodimer or homotetramer. Heme b is required as a cofactor. Formation of the three residue Trp-Tyr-Met cross-link is important for the catalase, but not the peroxidase activity of the enzyme.

It localises to the cytoplasm. It carries out the reaction H2O2 + AH2 = A + 2 H2O. The catalysed reaction is 2 H2O2 = O2 + 2 H2O. In terms of biological role, bifunctional enzyme with both catalase and broad-spectrum peroxidase activity. The polypeptide is Catalase-peroxidase (Aspergillus niger (strain ATCC MYA-4892 / CBS 513.88 / FGSC A1513)).